The following is a 184-amino-acid chain: uncharacterized protein (184 aa).

Belongs to the PhzF family.

The protein resides in the cytoplasm. The protein localises to the nucleus. This is an uncharacterized protein from Schizosaccharomyces pombe (strain 972 / ATCC 24843) (Fission yeast).